The sequence spans 365 residues: Quinolone epoxide rearrangement protein asqO (365 aa).

This sequence belongs to the quinolone epoxide rearrangement protein penF family.

It carries out the reaction (1'E,3'E)-5-(3,3-dimethyloxiran-2-yl)-3-methylhexa-1,3-dienyl-quinolinone B = aspoquinolone A. The enzyme catalyses (1'E,3'E)-5-(3,3-dimethyloxiran-2-yl)-3-methylhexa-1,3-dienyl-quinolinone B = aspoquinolone B. Its pathway is secondary metabolite biosynthesis. The protein operates within alkaloid biosynthesis. It participates in mycotoxin biosynthesis. Quinolone epoxide rearrangement protein; part of the gene cluster that mediates the biosynthesis of the aspoquinolone mycotoxins. Within the pathway, asqO catalyzes an enzymatic 3-exo-tet cyclization to yield the cyclopropyl-THF ring system in aspoquinolone. The first step of the pathway is catalyzed by the nonribosomal peptide synthetase asqK that condenses anthranilic acid and O-methyl-L-tyrosine to produce 4'-methoxycyclopeptin. 4'-methoxycyclopeptin is then converted to 4'-methoxydehydrocyclopeptin by the ketoglutarate-dependent dioxygenase asqJ. AsqJ also converts its first product 4'-methoxydehydrocyclopeptin to 4'-methoxycyclopenin. The following conversion of 4'-methoxycyclopenin into 4'-methoxyviridicatin is catalyzed by the cyclopenase asqI. 4'-methoxyviridicatin is the precursor of quinolone natural products, and is further converted to quinolinone B. The prenyltransferase asqH1 then catalyzes the canonical Friedel-Crafts alkylation of quinolinone B with dimethylallyl cation to yield dimethylallyl quinolone, which is subjected to FAD-dependent dehydrogenation by the FAD-linked oxidoreductase asqF to yield conjugated aryl diene. The delta(3') double bond then serves as the site of the second alkylation with DMAPP catalyzed by the prenyltransferase asqH2 to yield a carbenium ion intermediate, which can be attacked by H(2)O to yield a styrenyl quinolone containing a C3'-hydroxyprenyl chain. The FAD-dependent monooxygenase asqG performs epoxidation of the terminal C7'-C8' olefin. Finally, after dehydratation of the epoxide at C3 by asqC, the quinolone epoxide rearrangement protein asqO catalyzes an enzymatic 3-exo-tet cyclization to yield the cyclopropyl-THF ring system in aspoquinolone. This is Quinolone epoxide rearrangement protein asqO from Emericella nidulans (strain FGSC A4 / ATCC 38163 / CBS 112.46 / NRRL 194 / M139) (Aspergillus nidulans).